The sequence spans 166 residues: Phosphodiesterase MJ0936 (166 aa).

Residues Asp-8, His-10, Asp-36, Asn-59, His-97, His-120, and His-122 each contribute to the Mn(2+) site. Positions 8, 10, 36, 59, 97, 120, and 122 each coordinate Ni(2+).

This sequence belongs to the metallophosphoesterase superfamily. YfcE family. Monomer. Requires Ni(2+) as cofactor. It depends on Mn(2+) as a cofactor.

With respect to regulation, competitively inhibited by phosphate. Functionally, shows phosphodiesterase activity. Hydrolyzes phosphodiesters bonds in the artificial chromogenic substrates bis-p-nitrophenyl phosphate (bis-pNPP), and less efficiently thymidine 5'-monophosphate p-nitrophenyl ester (pNP-TMP) and p-nitrophenylphosphorylcholine (pNPPC). No catalytic activity was found toward cAMP or cGMP, nucleotides or phospholipase substrates such as phosphatidylcholine. The physiological substrate is unknown. The chain is Phosphodiesterase MJ0936 from Methanocaldococcus jannaschii (strain ATCC 43067 / DSM 2661 / JAL-1 / JCM 10045 / NBRC 100440) (Methanococcus jannaschii).